The primary structure comprises 215 residues: Adenylate kinase (215 aa).

10–15 (GSGKGT) is a binding site for ATP. The tract at residues 30-59 (STGDILREHVRNGTELGKEAKKYMDAGQLV) is NMP. Residues T31, R36, 57–59 (QLV), 85–88 (GYPR), and Q92 each bind AMP. The tract at residues 126–162 (GRRMCKCGRSYHIIFNPPKVPGKCDECGGELYHRDDD) is LID. R127 is a binding site for ATP. Residues C130 and C132 each coordinate Zn(2+). An ATP-binding site is contributed by 135–136 (SY). Zn(2+) contacts are provided by C149 and C152. 2 residues coordinate AMP: R159 and R170. Residue G198 participates in ATP binding.

The protein belongs to the adenylate kinase family. As to quaternary structure, monomer.

The protein localises to the cytoplasm. It carries out the reaction AMP + ATP = 2 ADP. Its pathway is purine metabolism; AMP biosynthesis via salvage pathway; AMP from ADP: step 1/1. Catalyzes the reversible transfer of the terminal phosphate group between ATP and AMP. Plays an important role in cellular energy homeostasis and in adenine nucleotide metabolism. The chain is Adenylate kinase from Methanothrix thermoacetophila (strain DSM 6194 / JCM 14653 / NBRC 101360 / PT) (Methanosaeta thermophila).